The following is a 325-amino-acid chain: Ribosomal RNA small subunit methyltransferase H (325 aa).

The tract at residues 1-28 (MTASQPLDQADQDSESSSAGSSAAETEH) is disordered. Residues 15 to 24 (ESSSAGSSAA) are compositionally biased toward low complexity. S-adenosyl-L-methionine-binding positions include 56–58 (GGH), Asp-82, Tyr-110, Asp-131, and Gln-138. The tract at residues 303 to 325 (TDEEVQANPRSRSAKLRVAKRVE) is disordered. Residues 314 to 325 (RSAKLRVAKRVE) are compositionally biased toward basic residues.

Belongs to the methyltransferase superfamily. RsmH family.

It is found in the cytoplasm. It carries out the reaction cytidine(1402) in 16S rRNA + S-adenosyl-L-methionine = N(4)-methylcytidine(1402) in 16S rRNA + S-adenosyl-L-homocysteine + H(+). Specifically methylates the N4 position of cytidine in position 1402 (C1402) of 16S rRNA. This is Ribosomal RNA small subunit methyltransferase H from Rhodopirellula baltica (strain DSM 10527 / NCIMB 13988 / SH1).